The sequence spans 243 residues: Tubulin-folding cofactor B (243 aa).

The region spanning 181 to 223 (RAESLGPGYWVGIQYDEPLGKHDGMVKGTRFFECPRLQGGMVR) is the CAP-Gly domain.

The protein belongs to the TBCB family. As to quaternary structure, supercomplex made of cofactors A to E. Cofactors A and D function by capturing and stabilizing tubulin in a quasi-native conformation. Cofactor E binds to the cofactor D-tubulin complex; interaction with cofactor C then causes the release of tubulin polypeptides that are committed to the native state. Interacts with TUBA6. In terms of tissue distribution, expressed in roots, stems, leaves, flowers and siliques.

It localises to the cytoplasm. Its function is as follows. Involved in control of cell division. Regulates probably the availability of alpha-tubulin for dimerization of alpha-/beta-tubulin, which is required for proper microtubule biogenesis. Decreased expression of TFCB results in enlarged mesophyll cells and leaf epidermal cells with bulged nuclei, increased ploidy and increased numbers of spindles and phragmoplasts. The polypeptide is Tubulin-folding cofactor B (TFCB) (Arabidopsis thaliana (Mouse-ear cress)).